A 300-amino-acid chain; its full sequence is Free fatty acid receptor 1 (300 aa).

Topologically, residues 1–8 (MDLPPQLS) are extracellular. A helical transmembrane segment spans residues 9 to 31 (FALYVSAFALGFPLNLLAIRGAV). Over 32–41 (SHAKLRLTPS) the chain is Cytoplasmic. Residues 42 to 64 (LVYTLHLGCSDLLLAITLPLKAV) form a helical membrane-spanning segment. The Extracellular portion of the chain corresponds to 65–79 (EALASGAWPLPLPFC). Cysteine 79 and cysteine 170 are joined by a disulfide. The helical transmembrane segment at 80–101 (PVFALAHFAPLYAGGGFLAALS) threads the bilayer. Residues 102–121 (AGRYLGAAFPFGYQAIRRPR) lie on the Cytoplasmic side of the membrane. A helical transmembrane segment spans residues 122-142 (YSWGVCVAIWALVLCHLGLAL). The Extracellular portion of the chain corresponds to 143 to 178 (GLETSGSWLDNSTSSLGINIPVNGSPVCLEAWDPDS). The N-linked (GlcNAc...) asparagine glycan is linked to asparagine 153. Residues 179-200 (ARPARLSFSILLFFLPLVITAF) traverse the membrane as a helical segment. Residues 201–223 (CYVGCLRALVRSGLSHKRKLRAA) are Cytoplasmic-facing. The chain crosses the membrane as a helical span at residues 224–248 (WVAGGALLTLLLCLGPYNASNVASF). Topologically, residues 249 to 256 (INPDLGGS) are extracellular. A helical membrane pass occupies residues 257–279 (WRKLGLITGAWSVVLNPLVTGYL). Residues 280-300 (GTGPGRGTICVTRTQRGTIQK) lie on the Cytoplasmic side of the membrane.

This sequence belongs to the G-protein coupled receptor 1 family. As to expression, expressed in pancreatic islet beta cells (at protein level). Expressed in pancreatic islet beta cells.

It is found in the cell membrane. Its activity is regulated as follows. Is also activated by synthetic agonists, such as AM-8182, AM-6331 and TAK-875 (fasiglifam). AM-8182 is a full agonist, while AM-6331 and TAK-875 (fasiglifam) are partial agonists that potentiate the activity of the endogenous ligands, such as alpha-linolenic acid and gamma-linolenic acid. G-protein coupled receptor for medium and long chain saturated and unsaturated fatty acids that plays an important role in glucose homeostasis. Fatty acid binding increases glucose-stimulated insulin secretion, and may also enhance the secretion of glucagon-like peptide 1 (GLP-1). May also play a role in bone homeostasis; receptor signaling activates pathways that inhibit osteoclast differentiation. Ligand binding leads to a conformation change that triggers signaling via G-proteins that activate phospholipase C, leading to an increase of the intracellular calcium concentration. Seems to act through a G(q) and G(i)-mediated pathway. Mediates the anti-inflammatory effects of omega-3 polyunsaturated fatty acids (PUFAs) via inhibition of NLRP3 inflammasome activation. In Mus musculus (Mouse), this protein is Free fatty acid receptor 1 (Ffar1).